The sequence spans 175 residues: Small ribosomal subunit protein uS7 (175 aa).

It belongs to the universal ribosomal protein uS7 family. Part of the 30S ribosomal subunit. Contacts proteins S9 and S11.

In terms of biological role, one of the primary rRNA binding proteins, it binds directly to 16S rRNA where it nucleates assembly of the head domain of the 30S subunit. Is located at the subunit interface close to the decoding center, probably blocks exit of the E-site tRNA. The protein is Small ribosomal subunit protein uS7 of Neorickettsia sennetsu (strain ATCC VR-367 / Miyayama) (Ehrlichia sennetsu).